The following is a 586-amino-acid chain: Pyruvate kinase (586 aa).

Arginine 32 serves as a coordination point for substrate. Positions 34, 36, 66, and 67 each coordinate K(+). 34–37 (NFSH) serves as a coordination point for ATP. ATP-binding residues include arginine 73 and lysine 156. Glutamate 222 is a Mg(2+) binding site. Positions 245, 246, and 278 each coordinate substrate. Aspartate 246 lines the Mg(2+) pocket.

It belongs to the pyruvate kinase family. In the C-terminal section; belongs to the PEP-utilizing enzyme family. Requires Mg(2+) as cofactor. It depends on K(+) as a cofactor.

It catalyses the reaction pyruvate + ATP = phosphoenolpyruvate + ADP + H(+). It functions in the pathway carbohydrate degradation; glycolysis; pyruvate from D-glyceraldehyde 3-phosphate: step 5/5. The protein is Pyruvate kinase (pyk) of Staphylococcus saprophyticus subsp. saprophyticus (strain ATCC 15305 / DSM 20229 / NCIMB 8711 / NCTC 7292 / S-41).